The primary structure comprises 356 residues: Histidinol-phosphate aminotransferase (356 aa).

Residue lysine 214 is modified to N6-(pyridoxal phosphate)lysine.

This sequence belongs to the class-II pyridoxal-phosphate-dependent aminotransferase family. Histidinol-phosphate aminotransferase subfamily. As to quaternary structure, homodimer. The cofactor is pyridoxal 5'-phosphate.

It carries out the reaction L-histidinol phosphate + 2-oxoglutarate = 3-(imidazol-4-yl)-2-oxopropyl phosphate + L-glutamate. It functions in the pathway amino-acid biosynthesis; L-histidine biosynthesis; L-histidine from 5-phospho-alpha-D-ribose 1-diphosphate: step 7/9. This is Histidinol-phosphate aminotransferase (hisC) from Escherichia coli O157:H7.